Here is a 385-residue protein sequence, read N- to C-terminus: MDEIINKYQAVEKLFKEIQEGLAMYDQYKTLINELLHYNNHIKQEYFNFLMIISPYLIRAHSGETLRNKVNNEIKRLILVENINTKISKTLVSVNFLLQKKLSTDGVKTKNMWCTNNPMLQVKTAHNLFKQLCDTQSKTQWVQTLKYKECKYCHTDMVFNTTQFGLQCPNCGCIQELMGTIFDETHFYNHDGQKAKSGIFNPNRHYRFWIEHILGRNSEQELGTKQDPCGTKVLQQLKKIIKRDNKCIALLTVENIRKMLKEINRTDLNNCVSLILRKLTGVGPPQISESILLRGEYIFTEAIKIREKVCKKGRINRNYYPYYIYKIFDAILPPNDTTNRRILQYIHLQGNDTLANNDSEWESICMELPEIKWKPTDRTHCVHFF.

C2H2-type zinc fingers lie at residues 166-190 (LQCP…FYNH) and 168-190 (CPNC…FYNH).

It belongs to the asfivirus B385R family.

The protein is Zinc finger protein B385R of African swine fever virus (isolate Tick/South Africa/Pretoriuskop Pr4/1996) (ASFV).